Reading from the N-terminus, the 481-residue chain is uncharacterized protein (481 aa).

Residues 18–38 (FMIVTAIAVAIFVVITGVVIF) form a helical membrane-spanning segment.

The protein localises to the cell inner membrane. Functionally, involved in DNA conjugation in the recipient strain. This is an uncharacterized protein from Mycolicibacterium smegmatis (strain MKD8) (Mycobacterium smegmatis).